Reading from the N-terminus, the 1216-residue chain is Apical endosomal glycoprotein (1216 aa).

The N-terminal stretch at 1–21 (MCLPSCLLSIWVLFMAAQSLG) is a signal peptide. The Extracellular segment spans residues 22–1155 (KTWVPDHCRS…SQGRVAAPVS (1134 aa)). Residues 27–54 (DHCRSPTEATCNFVCDCGDCSDEAQCGF) enclose the LDL-receptor class A 1; truncated domain. In terms of domain architecture, MAM 1 spans 62–224 (NTPFTCNFEQ…DDMEFWDCGL (163 aa)). The N-linked (GlcNAc...) asparagine glycan is linked to Asn-205. Positions 229–269 (ARCPLGHHHCQNKACVEPHQLCDGEDNCGDSSDEDPLICSH) constitute an LDL-receptor class A 2 domain. 3 disulfide bridges follow: Cys-231–Cys-243, Cys-238–Cys-256, and Cys-250–Cys-267. Residues 268 to 427 (SHHMATDFET…DLIMSNHCIL (160 aa)) form the MAM 2 domain. 3 N-linked (GlcNAc...) asparagine glycosylation sites follow: Asn-291, Asn-341, and Asn-368. Residues 454–491 (RTCDAGHLSCDELCVPPEQLCDFQQHCAEGEDEEKCGT) form the LDL-receptor class A 3 domain. Disulfide bonds link Cys-456/Cys-467, Cys-463/Cys-480, and Cys-474/Cys-489. MAM domains lie at 492–647 (TDFE…DCNP), 654–813 (DQEV…PCWA), 812–973 (WAAK…PCAQ), and 972–1142 (AQPG…HCKQ). The N-linked (GlcNAc...) asparagine glycan is linked to Asn-639. N-linked (GlcNAc...) asparagine glycosylation occurs at Asn-839. The chain crosses the membrane as a helical span at residues 1156–1176 (VPVAVGGALLLFLLLLGLGGW). The Cytoplasmic portion of the chain corresponds to 1177 to 1216 (HWLQKQHLPCQSTDAAASGFDNILFNADQVTLPESITSNP).

As to expression, apical endosomal tubules of developing rat intestinal epithelial cells.

The protein resides in the membrane. Its function is as follows. Probably involved in the sorting and selective transport of receptors and ligands across polarized epithelia. The polypeptide is Apical endosomal glycoprotein (Mamdc4) (Rattus norvegicus (Rat)).